A 105-amino-acid polypeptide reads, in one-letter code: Large ribosomal subunit protein uL24 (105 aa).

It belongs to the universal ribosomal protein uL24 family. As to quaternary structure, part of the 50S ribosomal subunit.

Its function is as follows. One of two assembly initiator proteins, it binds directly to the 5'-end of the 23S rRNA, where it nucleates assembly of the 50S subunit. In terms of biological role, one of the proteins that surrounds the polypeptide exit tunnel on the outside of the subunit. The chain is Large ribosomal subunit protein uL24 from Halorhodospira halophila (strain DSM 244 / SL1) (Ectothiorhodospira halophila (strain DSM 244 / SL1)).